The chain runs to 218 residues: N-(5'-phosphoribosyl)anthranilate isomerase (218 aa).

The protein belongs to the TrpF family.

It catalyses the reaction N-(5-phospho-beta-D-ribosyl)anthranilate = 1-(2-carboxyphenylamino)-1-deoxy-D-ribulose 5-phosphate. The protein operates within amino-acid biosynthesis; L-tryptophan biosynthesis; L-tryptophan from chorismate: step 3/5. In Desulfatibacillum aliphaticivorans, this protein is N-(5'-phosphoribosyl)anthranilate isomerase.